A 1407-amino-acid chain; its full sequence is Trichohyalin (1407 aa).

The segment at 1-91 (MSPLLKSIID…AQAAYYALGQ (91 aa)) is S-100-like. EF-hand domains lie at 23–48 (CDGAVLKKKDLKILLDREFGAVLQRP) and 49–84 (HDPETVDVMLELLDRDSDGLVGFDEFCLLIFKLAQA). Positions 32, 62, 64, 66, and 73 each coordinate Ca(2+). 7 disordered regions span residues 148–172 (EEEEQRKKRERFEQHYSRQYRDKEQ), 218–237 (LREEEQQRRERREQHERALQ), 362–471 (REQA…EEEQ), 486–587 (EQLQ…ERER), 1014–1033 (REEERLRRQERDRKFREEER), 1062–1082 (KEEKQLRRQERDRKFREEEQQ), and 1313–1407 (EQFA…QYRP). Composition is skewed to basic and acidic residues over residues 362 to 381 (REQARERGESLTRRWQRQLE), 396 to 424 (RRQEEQSLRQDQERRQRQERERELEEQAR), 447 to 471 (SLRERQLRAEERQEQEQRFREEEEQ), and 554 to 587 (QREKRRQEREREYREEEKLQREEDEKRRRQERER). Residues 1313–1376 (EQFAREEKSR…FREDQSRRQV (64 aa)) show a composition bias toward basic and acidic residues.

It belongs to the S100-fused protein family. In terms of assembly, homodimer. Post-translationally, substrate of transglutaminase. Some 200 arginines are probably converted to citrullines by peptidylarginine deimidase. In terms of tissue distribution, found in the hard keratinizing tissues such as the inner root sheath (IRS) of hair follicles and medulla, and in the filiform papillae of dorsal tongue epithelium.

Its function is as follows. Intermediate filament-associated protein that associates in regular arrays with keratin intermediate filaments (KIF) of the inner root sheath cells of the hair follicle and the granular layer of the epidermis. It later becomes cross-linked to KIF by isodipeptide bonds. It may serve as scaffold protein, together with involucrin, in the organization of the cell envelope or even anchor the cell envelope to the KIF network. It may be involved in its own calcium-dependent postsynthetic processing during terminal differentiation. The protein is Trichohyalin (TCHH) of Oryctolagus cuniculus (Rabbit).